Here is a 211-residue protein sequence, read N- to C-terminus: GTP-binding protein ypt5 (211 aa).

21–28 (GDSAVGKS) is a binding site for GTP. Positions 43 to 51 (RESTIGAAF) match the Effector region motif. GTP is bound by residues 70 to 74 (DTAGQ) and 128 to 131 (NKLD). Residues Cys-209 and Cys-211 are each lipidated (S-geranylgeranyl cysteine). Cys-211 carries the cysteine methyl ester modification.

This sequence belongs to the small GTPase superfamily. Rab family.

The protein localises to the cell membrane. Its function is as follows. Protein transport. Probably involved in vesicular traffic. This is GTP-binding protein ypt5 (ypt5) from Schizosaccharomyces pombe (strain 972 / ATCC 24843) (Fission yeast).